The chain runs to 671 residues: RNA polymerase sigma factor RpoD (671 aa).

Disordered stretches follow at residues 1 to 45 (MKKK…SKIK) and 229 to 260 (DDDENSVSDSKKDEDNEEDEENEERKKVVSEK). The span at 251-260 (EERKKVVSEK) shows a compositional bias: basic and acidic residues. The tract at residues 436 to 506 (MAKSNLRLVV…SRAIADQART (71 aa)) is sigma-70 factor domain-2. The Interaction with polymerase core subunit RpoC signature appears at 460–463 (DLIQ). The interval 515–591 (DTINRINKVM…DKNIVSSIDH (77 aa)) is sigma-70 factor domain-3. Residues 604-658 (VLDQLNEREKAVIRMRFGLLDDESDRTLEEIGKELNVTRERVRQIESSAIKKLRS) form a sigma-70 factor domain-4 region. A DNA-binding region (H-T-H motif) is located at residues 631-650 (LEEIGKELNVTRERVRQIES).

The protein belongs to the sigma-70 factor family. RpoD/SigA subfamily. As to quaternary structure, interacts transiently with the RNA polymerase catalytic core.

It localises to the cytoplasm. Functionally, sigma factors are initiation factors that promote the attachment of RNA polymerase to specific initiation sites and are then released. This sigma factor is the primary sigma factor during exponential growth. The chain is RNA polymerase sigma factor RpoD from Helicobacter pylori (strain ATCC 700392 / 26695) (Campylobacter pylori).